Consider the following 120-residue polypeptide: NAD(P)H-quinone oxidoreductase subunit 3, chloroplastic (120 aa).

A run of 3 helical transmembrane segments spans residues 7–27, 64–84, and 88–108; these read YDTFWIYLSISSLIPILAFSI, MFALVFVVFDVETVFLYPWAM, and ILGLFTFIEAFIFVIILIVGL.

Belongs to the complex I subunit 3 family. NDH is composed of at least 16 different subunits, 5 of which are encoded in the nucleus.

It is found in the plastid. Its subcellular location is the chloroplast thylakoid membrane. The catalysed reaction is a plastoquinone + NADH + (n+1) H(+)(in) = a plastoquinol + NAD(+) + n H(+)(out). It catalyses the reaction a plastoquinone + NADPH + (n+1) H(+)(in) = a plastoquinol + NADP(+) + n H(+)(out). NDH shuttles electrons from NAD(P)H:plastoquinone, via FMN and iron-sulfur (Fe-S) centers, to quinones in the photosynthetic chain and possibly in a chloroplast respiratory chain. The immediate electron acceptor for the enzyme in this species is believed to be plastoquinone. Couples the redox reaction to proton translocation, and thus conserves the redox energy in a proton gradient. This chain is NAD(P)H-quinone oxidoreductase subunit 3, chloroplastic, found in Cryptomeria japonica (Japanese cedar).